The sequence spans 26 residues: Conotoxin reg6(gamma) (26 aa).

A compositionally biased stretch (acidic residues) spans 1 to 12 (RVLEPGXEDPDV). The tract at residues 1–26 (RVLEPGXEDPDVGEPAGEYEHHLLEX) is disordered. Residue E4 is modified to 4-carboxyglutamate. Position 5 is a 4-hydroxyproline (P5). The residue at position 8 (E8) is a 4-carboxyglutamate. P10 is modified (4-hydroxyproline). E14 carries the 4-carboxyglutamate modification. 4-hydroxyproline is present on P15. 4-carboxyglutamate occurs at positions 18, 20, and 25.

Expressed by the venom duct.

The protein localises to the secreted. The polypeptide is Conotoxin reg6(gamma) (Conus regius (Crown cone)).